The chain runs to 318 residues: Protein W (318 aa).

Disordered stretches follow at residues 1-23 (MDQD…GGRE) and 38-318 (SEPT…KKGA). The segment covering 7–20 (ILKEDSEVEREAPG) has biased composition (basic and acidic residues). Polar residues predominate over residues 50–59 (LHNTINTPQG). Ser68 bears the Phosphoserine; by host mark. Residues 83–101 (RSGEESRVSGRTSKPEAEA) are compositionally biased toward basic and acidic residues. Position 125 is a phosphoserine; by host (Ser125). Residues 150–168 (GIEDENREMAAHPDKRGED) show a composition bias toward basic and acidic residues. Residues 191–206 (ASNNGRSMEPGSSHSA) are compositionally biased toward polar residues. Phosphoserine; by host is present on residues Ser192, Ser249, Ser257, and Ser260.

This is Protein W (P/V/C) from Sendai virus (strain Harris) (SeV).